Reading from the N-terminus, the 262-residue chain is MNSSFSAPAKKSLGQHFLADRYYIDRIVQAVDPRPGQHLVEIGPGQGAITFPLLRKHGALTVIEFDRDLIAPLTDAAAPIGQLQIIHRDVLAVDFTAVADGTPIRLVGNLPYNISSPILFHALDHASAVADMHFMLQKEVVDRMAAGPGSKVYGRLSVMLQAYCEVTALFVVPPGAFRPPPKVDSAVVRLVPRDAASVLIKDRKRFADVVRAGFGQRRKTLRNALSTVCEPAHFEAAGVRPDARAEQLEVADFIRLANVELA.

S-adenosyl-L-methionine-binding residues include H16, L18, G43, E64, D89, and N109.

Belongs to the class I-like SAM-binding methyltransferase superfamily. rRNA adenine N(6)-methyltransferase family. RsmA subfamily.

The protein localises to the cytoplasm. The enzyme catalyses adenosine(1518)/adenosine(1519) in 16S rRNA + 4 S-adenosyl-L-methionine = N(6)-dimethyladenosine(1518)/N(6)-dimethyladenosine(1519) in 16S rRNA + 4 S-adenosyl-L-homocysteine + 4 H(+). Its function is as follows. Specifically dimethylates two adjacent adenosines (A1518 and A1519) in the loop of a conserved hairpin near the 3'-end of 16S rRNA in the 30S particle. May play a critical role in biogenesis of 30S subunits. This Xanthomonas campestris pv. campestris (strain B100) protein is Ribosomal RNA small subunit methyltransferase A.